We begin with the raw amino-acid sequence, 306 residues long: MKLKTKASIKFGICVGLLCLSITGFTPFFNSTHAEAKSIEDTNMASCITNKKFVQLEKKFDARLGVYAIDIGSNKTIAYRPNERFAYASTYKVLAAAAVLKKNSIEKLNEVIHYSKDDLVTYSPITEKHLDTGMSLKEISEAAIRYSDNTAGNILLQQLGGPKGFEKSLKQIGDHVTKAKRFETDLNSAIPGDIRDTSTAKALATDLKAFTLDNTLTTDKRMILTDWMRGNATGDELIRAGAPIGWEVGDKSGAGSYGTRNDIAIVWPPNRAPIVVAILSNRFTKDANYDNALIAEAAKVVLNDLK.

The first 36 residues, Met1–Ala36, serve as a signal peptide directing secretion. The Acyl-ester intermediate role is filled by Ser89. Substrate is bound at residue Lys251 to Gly253.

It belongs to the class-A beta-lactamase family.

It is found in the secreted. The catalysed reaction is a beta-lactam + H2O = a substituted beta-amino acid. In terms of biological role, this protein is a beta-lactamase with a substrate specificity for penicillins. This Bacillus subtilis (strain 168) protein is Beta-lactamase (penP).